Here is a 170-residue protein sequence, read N- to C-terminus: Adenine phosphoribosyltransferase (170 aa).

The protein belongs to the purine/pyrimidine phosphoribosyltransferase family. Homodimer.

The protein localises to the cytoplasm. The enzyme catalyses AMP + diphosphate = 5-phospho-alpha-D-ribose 1-diphosphate + adenine. Its pathway is purine metabolism; AMP biosynthesis via salvage pathway; AMP from adenine: step 1/1. In terms of biological role, catalyzes a salvage reaction resulting in the formation of AMP, that is energically less costly than de novo synthesis. This Thermotoga neapolitana (strain ATCC 49049 / DSM 4359 / NBRC 107923 / NS-E) protein is Adenine phosphoribosyltransferase.